Here is a 277-residue protein sequence, read N- to C-terminus: Large ribosomal subunit protein uL2 (277 aa).

Disordered stretches follow at residues glutamine 35–histidine 58 and tryptophan 213–lysine 277.

This sequence belongs to the universal ribosomal protein uL2 family. As to quaternary structure, part of the 50S ribosomal subunit. Forms a bridge to the 30S subunit in the 70S ribosome.

One of the primary rRNA binding proteins. Required for association of the 30S and 50S subunits to form the 70S ribosome, for tRNA binding and peptide bond formation. It has been suggested to have peptidyltransferase activity; this is somewhat controversial. Makes several contacts with the 16S rRNA in the 70S ribosome. The polypeptide is Large ribosomal subunit protein uL2 (Staphylococcus carnosus (strain TM300)).